A 202-amino-acid polypeptide reads, in one-letter code: Ribosome maturation factor RimP (202 aa).

It belongs to the RimP family.

The protein resides in the cytoplasm. In terms of biological role, required for maturation of 30S ribosomal subunits. This Paracidovorax citrulli (strain AAC00-1) (Acidovorax citrulli) protein is Ribosome maturation factor RimP.